The chain runs to 218 residues: Cytochrome b6 (218 aa).

A helical membrane pass occupies residues 35–55; it reads IFYCLGGITLVCFLIQFATGF. Cys38 contacts heme c. His89 and His103 together coordinate heme b. The next 3 helical transmembrane spans lie at 93–113, 119–139, and 189–209; these read ASMM…TGGF, LTWI…VTGY, and LHTF…FLMI. The heme b site is built by His190 and His205.

This sequence belongs to the cytochrome b family. PetB subfamily. The 4 large subunits of the cytochrome b6-f complex are cytochrome b6, subunit IV (17 kDa polypeptide, PetD), cytochrome f and the Rieske protein, while the 4 small subunits are PetG, PetL, PetM and PetN. The complex functions as a dimer. It depends on heme b as a cofactor. Requires heme c as cofactor.

It localises to the cellular thylakoid membrane. Component of the cytochrome b6-f complex, which mediates electron transfer between photosystem II (PSII) and photosystem I (PSI), cyclic electron flow around PSI, and state transitions. The protein is Cytochrome b6 of Prochlorococcus marinus (strain NATL1A).